A 397-amino-acid polypeptide reads, in one-letter code: Growth-regulating factor 5 (397 aa).

The QLQ domain maps to proline 16 to arginine 51. 2 consecutive short sequence motifs (bipartite nuclear localization signal) follow at residues arginine 78–arginine 96 and arginine 114–lysine 121. The 45-residue stretch at aspartate 81–glutamine 125 folds into the WRC domain. Disordered stretches follow at residues cysteine 108–alanine 172, leucine 197–serine 217, proline 288–histidine 320, and valine 340–serine 397. Over residues histidine 111 to arginine 120 the composition is skewed to basic residues. Over residues threonine 128–alanine 172 the composition is skewed to low complexity. A compositionally biased stretch (basic and acidic residues) spans proline 288 to lysine 298.

It belongs to the GRF family. Interacts with GIF1. In terms of tissue distribution, strongly expressed in actively growing and developing tissues, such as roots, upper stems, and shoot tips containing the shoot apical meristem (SAM) and flower buds. Also expressed in mature flowers, but weakly expressed in mature stems and leaves.

The protein localises to the nucleus. Functionally, transcription activator that plays a role in the regulation of cell expansion in leaf and cotyledons tissues. Acts together with GIF1 for the development of appropriate leaf size and shape through the promotion and/or maintenance of cell proliferation activity in leaf primordia. The protein is Growth-regulating factor 5 (GRF5) of Arabidopsis thaliana (Mouse-ear cress).